The chain runs to 99 residues: MSFVMAYPEMLAAAADTLQSIGATTVASNAAAAAPTTGVVPPAADEVSALTAAHFAAHAAMYQSVSARAAAIHDQFVATLASSASSYAATEVANAAAAS.

In terms of domain architecture, PE spans 1 to 93 (MSFVMAYPEM…ASSYAATEVA (93 aa)).

This sequence belongs to the mycobacterial PE family.

The protein resides in the secreted. It is found in the cell wall. May play a pivotal role in the interaction between M.tuberculosis and host. Can enhance the survival within macrophages under stress conditions such as H(2)O(2), SDS and low pH. Increases the production of IL-6 and IL-1beta from macrophages, and decreases the secretion of suppressor of cytokine signaling 3 (SOCS-3). These changes probably involve the p38-ERK-NF-kappa-B signaling pathway. Also precipitates the macrophage death. This is PE family protein PE13 from Mycobacterium tuberculosis (strain ATCC 25618 / H37Rv).